Consider the following 238-residue polypeptide: Glyceraldehyde 3-phosphate phosphatase (238 aa).

The protein belongs to the HAD-like hydrolase superfamily. Requires Mg(2+) as cofactor.

Catalyzes the dephosphorylation of D,L-glyceraldehyde 3-phosphate in vitro. This is Glyceraldehyde 3-phosphate phosphatase from Pyrococcus abyssi (strain GE5 / Orsay).